Reading from the N-terminus, the 298-residue chain is MFAQARDRLQSGQVVRDYVALTKPRIVILLLITGFAAMWVAAGGPPPLGLTVVTMIGLALSCGAANAINMWYDRDIDAVMARTRRRPLPAGRLTPEQALRFGVITGALSFLVLLTVNLLTALLATAGLLFYVLVYTMWLKRSTVHNIVIGGAAGAAPPLVGWAAVTGRLDWAAVIMFLVVFLWTPPHFWALALFRSEDYERAGVPMLPVVRGERATKWQILLYSLLLIPSAALLYWTGTVGRLYLWTSVVLGCAMVSASVGLLRERAPQMDWAHRTYGWSLLYLFVIFLAMMLDVTRA.

Transmembrane regions (helical) follow at residues 26–46 (IVILLLITGFAAMWVAAGGPP), 48–68 (LGLTVVTMIGLALSCGAANAI), 110–130 (FLVLLTVNLLTALLATAGLLF), 147–167 (IVIGGAAGAAPPLVGWAAVTG), 174–194 (VIMFLVVFLWTPPHFWALALF), 220–240 (ILLYSLLLIPSAALLYWTGTV), 243–263 (LYLWTSVVLGCAMVSASVGLL), and 276–296 (TYGWSLLYLFVIFLAMMLDVT).

The protein belongs to the UbiA prenyltransferase family. Protoheme IX farnesyltransferase subfamily. Interacts with CtaA.

The protein resides in the cell membrane. It carries out the reaction heme b + (2E,6E)-farnesyl diphosphate + H2O = Fe(II)-heme o + diphosphate. It participates in porphyrin-containing compound metabolism; heme O biosynthesis; heme O from protoheme: step 1/1. Functionally, converts heme B (protoheme IX) to heme O by substitution of the vinyl group on carbon 2 of heme B porphyrin ring with a hydroxyethyl farnesyl side group. This is Protoheme IX farnesyltransferase from Symbiobacterium thermophilum (strain DSM 24528 / JCM 14929 / IAM 14863 / T).